Reading from the N-terminus, the 121-residue chain is Large ribosomal subunit protein uL18 (121 aa).

This sequence belongs to the universal ribosomal protein uL18 family. In terms of assembly, part of the 50S ribosomal subunit; part of the 5S rRNA/L5/L18/L25 subcomplex. Contacts the 5S and 23S rRNAs.

Functionally, this is one of the proteins that bind and probably mediate the attachment of the 5S RNA into the large ribosomal subunit, where it forms part of the central protuberance. The chain is Large ribosomal subunit protein uL18 from Leptothrix cholodnii (strain ATCC 51168 / LMG 8142 / SP-6) (Leptothrix discophora (strain SP-6)).